Consider the following 786-residue polypeptide: Constitutive coactivator of peroxisome proliferator-activated receptor gamma (786 aa).

A mediates transactivation of PPARG region spans residues 1 to 561 (MGVRGLQGFV…GTPSLEVLWL (561 aa)). Disordered stretches follow at residues 371–413 (PNQE…KLPS) and 738–786 (HWDS…WRRY). The span at 750-771 (QGYSSYRTDSTHGHSGQSWRNQ) shows a compositional bias: polar residues.

It belongs to the constitutive coactivator of PPAR-gamma family. In terms of assembly, interacts with ESR1 and RXRA. Interacts with PPARG; in a ligand-independent manner. Ubiquitously expressed (at protein level).

It localises to the nucleus. Its function is as follows. Functions as a transactivator of PPARG and ESR1. Functions in adipogenesis through PPARG activation. The sequence is that of Constitutive coactivator of peroxisome proliferator-activated receptor gamma (Fam120b) from Mus musculus (Mouse).